Reading from the N-terminus, the 451-residue chain is Mannan endo-1,6-alpha-mannosidase DCW1 (451 aa).

The signal sequence occupies residues 1 to 21; sequence MLAVTFTAAAVLSLLAASGRT. N-linked (GlcNAc...) asparagine glycans are attached at residues Asn-84, Asn-109, Asn-203, Asn-242, Asn-267, and Asn-291. Positions 397-419 are disordered; sequence AMNGGTSPGDPAAGTKTKAENLP. Residue Asp-427 is the site of GPI-anchor amidated aspartate attachment. Residues 428 to 451 constitute a propeptide, removed in mature form; sequence RAGAGIITALIGSSFLACTLWLII.

This sequence belongs to the glycosyl hydrolase 76 family.

Its subcellular location is the secreted. The protein resides in the cell wall. It is found in the cell membrane. It catalyses the reaction Random hydrolysis of (1-&gt;6)-alpha-D-mannosidic linkages in unbranched (1-&gt;6)-mannans.. In terms of biological role, required for normal synthesis of the cell wall. This is Mannan endo-1,6-alpha-mannosidase DCW1 (DCW1) from Eremothecium gossypii (strain ATCC 10895 / CBS 109.51 / FGSC 9923 / NRRL Y-1056) (Yeast).